A 510-amino-acid polypeptide reads, in one-letter code: 2-isopropylmalate synthase (510 aa).

In terms of domain architecture, Pyruvate carboxyltransferase spans 4-266 (IQVFDTTLRD…ETNLKLDETK (263 aa)). Residues aspartate 13, histidine 201, histidine 203, and asparagine 237 each coordinate Mn(2+). A regulatory domain region spans residues 390-510 (QVETLQLQFV…DTARKDGVVS (121 aa)).

It belongs to the alpha-IPM synthase/homocitrate synthase family. LeuA type 1 subfamily. In terms of assembly, homodimer. The cofactor is Mn(2+).

Its subcellular location is the cytoplasm. It catalyses the reaction 3-methyl-2-oxobutanoate + acetyl-CoA + H2O = (2S)-2-isopropylmalate + CoA + H(+). The protein operates within amino-acid biosynthesis; L-leucine biosynthesis; L-leucine from 3-methyl-2-oxobutanoate: step 1/4. In terms of biological role, catalyzes the condensation of the acetyl group of acetyl-CoA with 3-methyl-2-oxobutanoate (2-ketoisovalerate) to form 3-carboxy-3-hydroxy-4-methylpentanoate (2-isopropylmalate). This chain is 2-isopropylmalate synthase, found in Staphylococcus carnosus (strain TM300).